The chain runs to 388 residues: Trans-enoyl reductase tenC (388 aa).

Position 51 to 54 (51 to 54 (VDGK)) interacts with NADP(+). 142-149 (VGIASVGM) provides a ligand contact to substrate. NADP(+) contacts are provided by residues 219 to 222 (SSES), Tyr-237, and 284 to 285 (LD). A substrate-binding site is contributed by 304–308 (SFTQF). 373–374 (IK) is an NADP(+) binding site.

Belongs to the zinc-containing alcohol dehydrogenase family. In terms of assembly, monomer.

The protein operates within secondary metabolite biosynthesis. Functionally, trans-enoyl reductase; part of the gene cluster that mediates the biosynthesis of tenellin-type 2-pyridones, iron-chelating compounds involved in iron stress tolerance, competition with the natural competitor fungus Metarhizium robertsii and insect hosts infection. TenC collaborates with the hybrid PKS-NRPS synthetase tenS to catalyze the assembly of the polyketide-amino acid backbone, since tenS lacks a designated enoylreductase (ER) domain. Upon formation of the polyketide backbone on the thiotemplate of tenS, the triketide is transferred to the NRPS module and linked to tyrosine to produce the pyrrolidine-2-dione intermediates, including pretellinin A, 11-hydropretellenin A, 12-hydropretellenin A, 13-hydropretellenin A, 14-hydropretellenin A, 12-oxopretellenin A and prototellinin D. The pathway begins with the assembly of the polyketide-amino acid backbone by the hybrid PKS-NRPS tenS with the help of the enoyl reductase tenC. These enzymes catalyze the synthesis of the pyrrolidine-2-dione intermediates pretellinin A, 11-hydropretellenin A, 12-hydropretellenin A, 13-hydropretellenin A, 14-hydropretellenin A, 12-oxopretellenin A and prototellinin D. The cytochrome P450 monooxygenase tenA then catalyzes an oxidative ring expansion of pretenellin A and 14-hydropretellenin A to form the 2-pyridone core, leading to pretenellin B and pyridovericin, respectively. The cytochrome P450 monooxygenase tenB is then required for the selective N-hydroxylation of the 2-pyridone nitrogen of yield tellinin and 15-hydroxytellenin (15-HT), respectively. The UDP-glucosyltransferase GT1 and the methyltransferase MT1, located outside the tenS gene cluster, contribute to the stepwise glycosylation and methylation of 15-HT to obtain the glycoside pyridovericin-N-O-(4-O-methyl-beta-D-glucopyranoside) (PMGP). Additional related compounds such as 1-O-methyl-15-HT, (8Z)-1-O-methyl-15-HT, and O-methyltenellin A are also produced but the enzymes involved in their biosynthesis have still to be determined. In Beauveria bassiana (strain ARSEF 2860) (White muscardine disease fungus), this protein is Trans-enoyl reductase tenC.